The sequence spans 433 residues: uncharacterized protein (433 aa).

Residues 36-58 traverse the membrane as a helical segment; the sequence is YYYYVQLAFKMLVGVLKNLPVVY. The disordered stretch occupies residues 169–433; sequence VRVPSRDLQP…GEGRDLPEDN (265 aa). 2 stretches are compositionally biased toward acidic residues: residues 216 to 227 and 234 to 254; these read GEPGENGDESDE and GDEDAAQSEQNNDDGMDYESD. 3 stretches are compositionally biased toward basic and acidic residues: residues 265–280, 354–364, and 422–433; these read EPDRRHDAEAGERGSE, GGRRPARRDSP, and RRGEGRDLPEDN.

It is found in the host membrane. This is an uncharacterized protein from Psittacid herpesvirus 1 (isolate Amazon parrot/-/97-0001/1997) (PsHV-1).